Here is a 255-residue protein sequence, read N- to C-terminus: Putative esterase YitV (255 aa).

This Bacillus subtilis (strain 168) protein is Putative esterase YitV (yitV).